The following is a 557-amino-acid chain: Hdr-like menaquinol oxidoreductase iron-sulfur subunit (557 aa).

4Fe-4S ferredoxin-type domains follow at residues 86-115 (RAFK…GDPK) and 155-184 (KEWY…AEVV). Cys-95, Cys-98, Cys-101, Cys-105, Cys-164, Cys-167, Cys-170, and Cys-174 together coordinate [4Fe-4S] cluster.

Requires [4Fe-4S] cluster as cofactor.

It localises to the membrane. Its function is as follows. Has menaquinol-oxidizing activity. The HmeC and HmeD subunits may together mediate electron transfer from menaquinol to an unidentified electron acceptor on the cytoplasmic side of the membrane. This is Hdr-like menaquinol oxidoreductase iron-sulfur subunit (hmeD) from Archaeoglobus profundus (strain DSM 5631 / JCM 9629 / NBRC 100127 / Av18).